The chain runs to 423 residues: Gamma-glutamyl phosphate reductase (423 aa).

The protein belongs to the gamma-glutamyl phosphate reductase family.

It is found in the cytoplasm. It carries out the reaction L-glutamate 5-semialdehyde + phosphate + NADP(+) = L-glutamyl 5-phosphate + NADPH + H(+). Its pathway is amino-acid biosynthesis; L-proline biosynthesis; L-glutamate 5-semialdehyde from L-glutamate: step 2/2. Functionally, catalyzes the NADPH-dependent reduction of L-glutamate 5-phosphate into L-glutamate 5-semialdehyde and phosphate. The product spontaneously undergoes cyclization to form 1-pyrroline-5-carboxylate. The sequence is that of Gamma-glutamyl phosphate reductase from Burkholderia pseudomallei (strain 1710b).